A 1032-amino-acid chain; its full sequence is Protein phosphatase 1 regulatory subunit 12A (1032 aa).

Residues 35 to 38 (KVKF) carry the KVKF motif motif. ANK repeat units follow at residues 39-68 (DDGA…DINY), 72-101 (DGLT…NINQ), 105-134 (EGWI…HVGA), 138-164 (EGDT…RQGV), 198-227 (SGGT…DVNI), and 231-260 (DGWT…DMET). (3S)-3-hydroxyasparagine; by HIF1AN occurs at positions 67 and 100. Residue N226 is modified to (3S)-3-hydroxyasparagine; by HIF1AN. Disordered regions lie at residues 290–553 (LHSE…HRSC) and 588–928 (SSTS…RLEK). Positions 291–300 (HSEKRDKKSP) are enriched in basic and acidic residues. S299 carries the post-translational modification Phosphoserine. The segment covering 302-316 (IESTANMENNQPQKT) has biased composition (polar residues). The span at 318–340 (KNKETLIIEPEKNASRIESLEQE) shows a compositional bias: basic and acidic residues. Positions 357-369 (SEEDEEDDSESEA) are enriched in acidic residues. Over residues 383-399 (AHTASTQAAPAAVTTPT) the composition is skewed to low complexity. Residues 400–421 (LSSNQGTPTSPVKKFPTSTTKI) show a composition bias toward polar residues. Residues S422 and S432 each carry the phosphoserine modification. Residues 422-432 (SPKEEERKDES) show a composition bias toward basic and acidic residues. T443 is subject to Phosphothreonine. Residue S445 is modified to Phosphoserine. Y446 bears the Phosphotyrosine mark. Residues 469–480 (RSASSPRLSSSL) are compositionally biased toward low complexity. S472 carries the post-translational modification Phosphoserine; by NUAK1. The residue at position 473 (S473) is a Phosphoserine; by CDK1. Residue S477 is modified to Phosphoserine. Over residues 481–491 (DNKEKEKDNKG) the composition is skewed to basic and acidic residues. S507 and S509 each carry phosphoserine. The segment covering 540–551 (NSSINEGSTYHR) has biased composition (polar residues). A Phosphoserine modification is found at S601. Positions 602–612 (PAGTQSSTSNR) are enriched in polar residues. Positions 614–625 (WAEDSTEKEKDS) are enriched in basic and acidic residues. At S618 the chain carries Phosphoserine. Over residues 633-661 (LVAPTVVSAAASSTTALTTTTAGTLSSTS) the composition is skewed to low complexity. The span at 674 to 683 (VRDEESESQR) shows a compositional bias: basic and acidic residues. The interval 683–866 (RKARSRQARQ…VSFWTQDSDE (184 aa)) is interaction with ROCK2. A compositionally biased stretch (basic residues) spans 684–694 (KARSRQARQSR). Residues S693 and S696 each carry the phosphoserine; by PKA and PKG; in vitro modification. The residue at position 697 (T697) is a Phosphothreonine; by ROCK1, ROCK2, CDC42BP, ZIPK/DAPK3 and RAF1. Basic and acidic residues predominate over residues 719 to 768 (RTREQENEEKDKEEKEKQDKEKQEEKKESEVSREDEYKQKYSRTYDETYA). The span at 774-797 (STSSSSTPSSSSLSTLGSSLYASS) shows a compositional bias: low complexity. The span at 798–812 (QLNRPNSLVGITSAY) shows a compositional bias: polar residues. S804 is modified (phosphoserine). Positions 816–842 (LTKDNEREGEKKEEEKEGEDKSQPKSI) are enriched in basic and acidic residues. Basic residues predominate over residues 843-854 (RERRRPREKRRS). Position 854 is a phosphoserine; by ROCK2 (S854). Phosphoserine is present on residues S864 and S873. The segment covering 869–885 (QERQSDTEDGSSKRDTQ) has biased composition (basic and acidic residues). Positions 886–900 (TDSVSRYDSSSTSSS) are enriched in low complexity. Phosphoserine occurs at positions 905 and 910. Phosphoserine; by NUAK1 is present on S912. Over residues 916 to 928 (LEERKPYGSRLEK) the composition is skewed to basic and acidic residues. S997 is subject to Phosphoserine.

PP1 comprises a catalytic subunit, PPP1CA, PPP1CB or PPP1CC, and one or several targeting or regulatory subunits. PPP1R12A mediates binding to myosin. Interacts with ARHA and CIT. Binds PPP1R12B, ROCK1 and IL16. Interacts directly with PRKG1. Non-covalent dimer of 2 dimers; PRKG1-PRKG1 and PPP1R12A-PPP1R12A. Interacts with SMTNL1. Interacts with PPP1CB; the interaction is direct. Interacts (when phosphorylated at Ser-445, Ser-472 and Ser-910) with 14-3-3. Interacts with ROCK1 and ROCK2. Interacts with isoform 1 and isoform 2 of ZIPK/DAPK3. Interacts with RAF1. Interacts with HIF1AN. Interacts with NCKAP1L. In terms of processing, phosphorylated on upon DNA damage, probably by ATM or ATR. Phosphorylated by CIT (Rho-associated kinase). Phosphorylated cooperatively by ROCK1 and CDC42BP on Thr-697. In vitro, phosphorylation of Ser-696 by PKA and PKG appears to prevent phosphorylation of the inhibitory site Thr-697, probably mediated by PRKG1. May be phosphorylated at Thr-697 by DMPK; may inhibit the myosin phosphatase activity. Phosphorylated at Ser-473 by CDK1 during mitosis, creating docking sites for the POLO box domains of PLK1. Subsequently, PLK1 binds and phosphorylates PPP1R12A. As to expression, smooth muscle. Detected in aorta, portal vein, stomach, intestine, bladder and lung.

It localises to the cytoplasm. It is found in the cytoskeleton. The protein localises to the stress fiber. In terms of biological role, key regulator of protein phosphatase 1C (PPP1C). Mediates binding to myosin. As part of the PPP1C complex, involved in dephosphorylation of PLK1. Capable of inhibiting HIF1AN-dependent suppression of HIF1A activity. The sequence is that of Protein phosphatase 1 regulatory subunit 12A from Rattus norvegicus (Rat).